The chain runs to 492 residues: uncharacterized protein (492 aa).

12 helical membrane-spanning segments follow: residues 16 to 36, 39 to 59, 107 to 127, 133 to 153, 162 to 182, 210 to 230, 243 to 263, 291 to 311, 350 to 370, 394 to 414, 429 to 449, and 454 to 474; these read FIAF…VMTM, VGPF…GVVL, SFNG…IPVV, IIIG…FISL, AIFY…ILGI, IIFI…LASI, FLIA…IISG, LVGG…NSLA, VLIS…IPFL, MAAA…FMIF, VSYV…LFPF, and VFNT…VGFF.

The protein to M.genitalium MG225.

It localises to the cell membrane. This is an uncharacterized protein from Mycoplasma genitalium (strain ATCC 33530 / DSM 19775 / NCTC 10195 / G37) (Mycoplasmoides genitalium).